The following is a 710-amino-acid chain: PC3-like endoprotease variant B (710 aa).

Residues 1-29 form the signal peptide; the sequence is MNYRGIYRRRYVFVLLLLVAVVNISYGWT. N-linked (GlcNAc...) asparagine glycans are attached at residues Asn23, Asn62, and Asn190. A propeptide spanning residues 30–152 is cleaved from the precursor; the sequence is VLKNKDYKRR…QQKILERVKR (123 aa). The region spanning 164–486 is the Peptidase S8 domain; that stretch reads MWYLLNTGQA…FGRLDANAMV (323 aa). Residues Asp202 and His242 each act as charge relay system in the active site. Disulfide bonds link Cys259–Cys411 and Cys351–Cys381. The active-site Charge relay system is the Ser419. Residues 495-638 form the P/Homo B domain; the sequence is LPAQRKCTAA…EERVIDTQTK (144 aa). A disulfide bond links Cys501 and Cys527. Residues 668–710 are disordered; sequence TIEGSTQDHVKPKEGAKEPWGNYRNTNNINNNSSTAFKRKKKQ. Residues 673–684 show a composition bias toward basic and acidic residues; it reads TQDHVKPKEGAK. Positions 689–699 are enriched in low complexity; the sequence is NYRNTNNINNN. Residues Asn698 and Asn699 are each glycosylated (N-linked (GlcNAc...) asparagine).

The protein belongs to the peptidase S8 family. Furin subfamily. Predominantly in the body column.

Probably involved in the processing of hormone and other protein precursors at sites comprised of pairs of basic amino acid residues. This is PC3-like endoprotease variant B from Hydra vulgaris (Hydra).